Reading from the N-terminus, the 148-residue chain is UPF0756 membrane protein YeaL (148 aa).

The next 4 membrane-spanning stretches (helical) occupy residues 14–34, 51–71, 86–106, and 121–141; these read ALGF…LIIV, LSIG…SGTL, LVAI…VTLM, and VLGV…AGLV.

Belongs to the UPF0756 family.

The protein resides in the cell membrane. In Shigella flexneri, this protein is UPF0756 membrane protein YeaL.